Here is a 166-residue protein sequence, read N- to C-terminus: Large ribosomal subunit protein uL10 (166 aa).

Belongs to the universal ribosomal protein uL10 family. Part of the ribosomal stalk of the 50S ribosomal subunit. The N-terminus interacts with L11 and the large rRNA to form the base of the stalk. The C-terminus forms an elongated spine to which L12 dimers bind in a sequential fashion forming a multimeric L10(L12)X complex.

Its function is as follows. Forms part of the ribosomal stalk, playing a central role in the interaction of the ribosome with GTP-bound translation factors. This is Large ribosomal subunit protein uL10 from Listeria monocytogenes serotype 4b (strain CLIP80459).